A 771-amino-acid polypeptide reads, in one-letter code: 5-methyltetrahydropteroyltriglutamate--homocysteine methyltransferase (771 aa).

Residues 16–19 and lysine 117 each bind 5-methyltetrahydropteroyltri-L-glutamate; that span reads RELK. L-homocysteine-binding positions include 443–445 and glutamate 496; that span reads IGS. Residues 443–445 and glutamate 496 each bind L-methionine; that span reads IGS. Residues 527 to 528 and tryptophan 573 contribute to the 5-methyltetrahydropteroyltri-L-glutamate site; that span reads RC. Aspartate 611 contacts L-homocysteine. Residue aspartate 611 coordinates L-methionine. A 5-methyltetrahydropteroyltri-L-glutamate-binding site is contributed by glutamate 617. Residues histidine 653, cysteine 655, and glutamate 677 each coordinate Zn(2+). Histidine 706 functions as the Proton donor in the catalytic mechanism. Cysteine 738 is a binding site for Zn(2+).

The protein belongs to the vitamin-B12 independent methionine synthase family. Requires Zn(2+) as cofactor.

The catalysed reaction is 5-methyltetrahydropteroyltri-L-glutamate + L-homocysteine = tetrahydropteroyltri-L-glutamate + L-methionine. It functions in the pathway amino-acid biosynthesis; L-methionine biosynthesis via de novo pathway; L-methionine from L-homocysteine (MetE route): step 1/1. In terms of biological role, catalyzes the transfer of a methyl group from 5-methyltetrahydrofolate to homocysteine resulting in methionine formation. The sequence is that of 5-methyltetrahydropteroyltriglutamate--homocysteine methyltransferase from Stutzerimonas stutzeri (strain A1501) (Pseudomonas stutzeri).